Reading from the N-terminus, the 266-residue chain is Vitamin B12-binding protein (266 aa).

The signal sequence occupies residues 1 to 22 (MVKQMFRALVALLLTLPVWLYA). One can recognise a Fe/B12 periplasmic-binding domain in the interval 25–266 (RVITLSPANT…QLCNALSQVN (242 aa)). Residues Tyr-50 and 242–246 (DWFER) each bind cyanocob(III)alamin. Cys-183 and Cys-259 are oxidised to a cystine.

It belongs to the BtuF family. As to quaternary structure, the complex is composed of two ATP-binding proteins (BtuD), two transmembrane proteins (BtuC) and a solute-binding protein (BtuF).

Its subcellular location is the periplasm. In terms of biological role, part of the ABC transporter complex BtuCDF involved in vitamin B12 import. Binds vitamin B12 and delivers it to the periplasmic surface of BtuC. The sequence is that of Vitamin B12-binding protein from Salmonella choleraesuis (strain SC-B67).